The chain runs to 456 residues: tRNA modification GTPase MnmE (456 aa).

Arg-24, Glu-81, and Lys-120 together coordinate (6S)-5-formyl-5,6,7,8-tetrahydrofolate. Positions 216–379 (GMTVVIAGRP…LREHLKACMG (164 aa)) constitute a TrmE-type G domain. K(+) is bound at residue Asn-226. Residues 226 to 231 (NAGKSS), 245 to 251 (TEIAGTT), 270 to 273 (DTAG), 335 to 338 (NKAD), and 359 to 361 (SAR) each bind GTP. Ser-230 is a binding site for Mg(2+). Residues Thr-245, Ile-247, and Thr-250 each coordinate K(+). A Mg(2+)-binding site is contributed by Thr-251. Lys-456 is a (6S)-5-formyl-5,6,7,8-tetrahydrofolate binding site.

This sequence belongs to the TRAFAC class TrmE-Era-EngA-EngB-Septin-like GTPase superfamily. TrmE GTPase family. Homodimer. Heterotetramer of two MnmE and two MnmG subunits. It depends on K(+) as a cofactor.

It is found in the cytoplasm. In terms of biological role, exhibits a very high intrinsic GTPase hydrolysis rate. Involved in the addition of a carboxymethylaminomethyl (cmnm) group at the wobble position (U34) of certain tRNAs, forming tRNA-cmnm(5)s(2)U34. This chain is tRNA modification GTPase MnmE, found in Pseudomonas savastanoi pv. phaseolicola (strain 1448A / Race 6) (Pseudomonas syringae pv. phaseolicola (strain 1448A / Race 6)).